Here is a 370-residue protein sequence, read N- to C-terminus: (5-formylfuran-3-yl)methyl phosphate transaminase (370 aa).

At K222 the chain carries N6-(pyridoxal phosphate)lysine.

It belongs to the class-I pyridoxal-phosphate-dependent aminotransferase family. As to quaternary structure, homodimer. Pyridoxal 5'-phosphate serves as cofactor.

The protein localises to the cytoplasm. The catalysed reaction is 4-(hydroxymethyl)-2-furancarboxaldehyde phosphate + L-alanine = [5-(aminomethyl)-3-furyl]methyl phosphate + pyruvate. It participates in cofactor biosynthesis; methanofuran biosynthesis. Its function is as follows. Catalyzes the transamination reaction between 4-(hydroxymethyl)-2-furancarboxaldehyde phosphate (4-HFC-P) and alanine to produce pyruvate and 5-(aminomethyl)-3-furanmethanol phosphate (F1-P), the precursor for the furan moiety in methanofuran. This chain is (5-formylfuran-3-yl)methyl phosphate transaminase, found in Methanocaldococcus jannaschii (strain ATCC 43067 / DSM 2661 / JAL-1 / JCM 10045 / NBRC 100440) (Methanococcus jannaschii).